The following is a 95-amino-acid chain: Progonadoliberin-1 (95 aa).

The first 22 residues, 1–22, serve as a signal peptide directing secretion; it reads MAPQTFALWLLLVGTLLGQGCC. A Pyrrolidone carboxylic acid modification is found at glutamine 23. At glycine 32 the chain carries Glycine amide.

The protein belongs to the GnRH family.

It localises to the secreted. Its function is as follows. Stimulates the secretion of gonadotropins. The protein is Progonadoliberin-1 (gnrh1) of Morone saxatilis (Striped bass).